Here is a 228-residue protein sequence, read N- to C-terminus: Ribose-5-phosphate isomerase A (228 aa).

Residues 29–32 (TGST), 84–87 (DGAD), and 97–100 (KGGG) contribute to the substrate site. Residue glutamate 106 is the Proton acceptor of the active site. Residue lysine 124 participates in substrate binding.

The protein belongs to the ribose 5-phosphate isomerase family. In terms of assembly, homodimer.

The enzyme catalyses aldehydo-D-ribose 5-phosphate = D-ribulose 5-phosphate. Its pathway is carbohydrate degradation; pentose phosphate pathway; D-ribose 5-phosphate from D-ribulose 5-phosphate (non-oxidative stage): step 1/1. Functionally, catalyzes the reversible conversion of ribose-5-phosphate to ribulose 5-phosphate. In Sphingopyxis alaskensis (strain DSM 13593 / LMG 18877 / RB2256) (Sphingomonas alaskensis), this protein is Ribose-5-phosphate isomerase A.